Consider the following 299-residue polypeptide: Leucine zipper transcription factor-like protein 1 (299 aa).

A coiled-coil region spans residues 96 to 299; the sequence is LKLQTDISEL…KRLAKYESED (204 aa). An interaction with BSS9 region spans residues 145–299; that stretch reads GTTELLNKEI…KRLAKYESED (155 aa).

This sequence belongs to the LZTFL1 family. Self-associates. Interacts with BBS9; the interaction mediates the association of LZTL1 with the BBsome complex and regulates BBSome ciliary trafficking. As to expression, highly expressed in testis. Expressed in brain, cerebellum, eye, heart, kidney, liver, lung and trachea. In small intestine, graded expression along the crypt-villus axis with high levels in the villus apex and lower levels in the crypt stem cells (at protein level). Not expressed in skeletal muscle and white adipose tissue.

The protein localises to the cytoplasm. Functionally, regulates ciliary localization of the BBSome complex. Together with the BBSome complex, controls SMO ciliary trafficking and contributes to the sonic hedgehog (SHH) pathway regulation. May play a role in neurite outgrowth. May have tumor suppressor function. The protein is Leucine zipper transcription factor-like protein 1 (Lztfl1) of Mus musculus (Mouse).